The chain runs to 195 residues: GTP-dependent dephospho-CoA kinase (195 aa).

Positions 49, 50, 68, 127, and 150 each coordinate GTP.

This sequence belongs to the GTP-dependent DPCK family.

The catalysed reaction is 3'-dephospho-CoA + GTP = GDP + CoA + H(+). It functions in the pathway cofactor biosynthesis; coenzyme A biosynthesis. Catalyzes the GTP-dependent phosphorylation of the 3'-hydroxyl group of dephosphocoenzyme A to form coenzyme A (CoA). This chain is GTP-dependent dephospho-CoA kinase, found in Methanosarcina barkeri (strain Fusaro / DSM 804).